We begin with the raw amino-acid sequence, 500 residues long: Glycerol kinase (500 aa).

Residue Thr12 coordinates ADP. Thr12, Thr13, and Ser14 together coordinate ATP. Thr12 is a binding site for sn-glycerol 3-phosphate. Residue Arg16 coordinates ADP. Sn-glycerol 3-phosphate is bound by residues Arg82, Glu83, Tyr135, and Asp245. Positions 82, 83, 135, 245, and 246 each coordinate glycerol. ADP contacts are provided by Thr267 and Gly310. Residues Thr267, Gly310, Gln314, and Gly411 each contribute to the ATP site. Gly411 and Asn415 together coordinate ADP.

The protein belongs to the FGGY kinase family. As to quaternary structure, homotetramer and homodimer (in equilibrium).

The enzyme catalyses glycerol + ATP = sn-glycerol 3-phosphate + ADP + H(+). It functions in the pathway polyol metabolism; glycerol degradation via glycerol kinase pathway; sn-glycerol 3-phosphate from glycerol: step 1/1. Its activity is regulated as follows. Activated by phosphorylation and inhibited by fructose 1,6-bisphosphate (FBP). Key enzyme in the regulation of glycerol uptake and metabolism. Catalyzes the phosphorylation of glycerol to yield sn-glycerol 3-phosphate. In Clostridium perfringens (strain ATCC 13124 / DSM 756 / JCM 1290 / NCIMB 6125 / NCTC 8237 / Type A), this protein is Glycerol kinase.